Here is a 343-residue protein sequence, read N- to C-terminus: MKNILNFTLDELKDWMDKNSESKFRAKQIFQWIYKKAVFNFDDMSNISKSTKEKLKENFYIQIPNVVKKYVSNIDGTEKFLFEYEDGNIIESVVMKYKHGNSICVSTQIGCRMGCKFCASTVDGVVRNLTSGEIIAQVLKAQKEICDRISNVVLMGSGEPLDNYDNVIKFLKLINDEDALNIGQRHITLSTCGIVPKIKELADQKMQITLAISLHAPNNEIRKSMMPIANKYTLEELLDACRYYYRTTNRRITFEYALVKGVNDSRENAEELIKISKGMLCHINLIPVNEIKENNYERSKSKDIEEFKETLIKHGIETTIRREMGSDINGACGQLRRNYIRNN.

Glutamate 91 (proton acceptor) is an active-site residue. The 231-residue stretch at 97-327 (YKHGNSICVS…TTIRREMGSD (231 aa)) folds into the Radical SAM core domain. A disulfide bridge links cysteine 104 with cysteine 332. Residues cysteine 111, cysteine 115, and cysteine 118 each coordinate [4Fe-4S] cluster. S-adenosyl-L-methionine contacts are provided by residues 158 to 159 (GE), serine 190, 213 to 215 (SLH), and asparagine 289. The S-methylcysteine intermediate role is filled by cysteine 332.

Belongs to the radical SAM superfamily. RlmN family. The cofactor is [4Fe-4S] cluster.

It is found in the cytoplasm. It catalyses the reaction adenosine(2503) in 23S rRNA + 2 reduced [2Fe-2S]-[ferredoxin] + 2 S-adenosyl-L-methionine = 2-methyladenosine(2503) in 23S rRNA + 5'-deoxyadenosine + L-methionine + 2 oxidized [2Fe-2S]-[ferredoxin] + S-adenosyl-L-homocysteine. The catalysed reaction is adenosine(37) in tRNA + 2 reduced [2Fe-2S]-[ferredoxin] + 2 S-adenosyl-L-methionine = 2-methyladenosine(37) in tRNA + 5'-deoxyadenosine + L-methionine + 2 oxidized [2Fe-2S]-[ferredoxin] + S-adenosyl-L-homocysteine. Its function is as follows. Specifically methylates position 2 of adenine 2503 in 23S rRNA and position 2 of adenine 37 in tRNAs. The protein is Probable dual-specificity RNA methyltransferase RlmN of Clostridium novyi (strain NT).